We begin with the raw amino-acid sequence, 346 residues long: Serpentine receptor class gamma-20 (346 aa).

7 helical membrane passes run 27–47 (VMLSILEYLVQATYLSVSAVL), 69–89 (FFVLYAAEAVMNVYSCVIEVL), 106–128 (PFFFTPSILTKLYFLLNHYCLAF), 157–177 (ILAPVLVSLFVLPLGVTWNIL), 212–232 (IPCLFLMIVFFLASIFGLTML), 254–274 (TMLFAIAQIYFAFLAGYLPGI), and 279–299 (LLISFNVFDVLYVYSPIALIL).

This sequence belongs to the nematode receptor-like protein srg family.

It localises to the membrane. The sequence is that of Serpentine receptor class gamma-20 (srg-20) from Caenorhabditis elegans.